We begin with the raw amino-acid sequence, 320 residues long: Cytochrome f (320 aa).

Positions 1–35 (MHTKNLFYSRPQQITQYLSAFLMMVILTRTSISSA) are cleaved as a signal peptide. The heme site is built by Y36, C56, C59, and H60. The helical transmembrane segment at 286 to 306 (VQVLLFFFASIILAQIFLVLK) threads the bilayer.

The protein belongs to the cytochrome f family. The 4 large subunits of the cytochrome b6-f complex are cytochrome b6, subunit IV (17 kDa polypeptide, petD), cytochrome f and the Rieske protein, while the 4 small subunits are PetG, PetL, PetM and PetN. The complex functions as a dimer. Requires heme as cofactor.

Its subcellular location is the plastid thylakoid membrane. In terms of biological role, component of the cytochrome b6-f complex, which mediates electron transfer between photosystem II (PSII) and photosystem I (PSI), cyclic electron flow around PSI, and state transitions. The protein is Cytochrome f of Cuscuta obtusiflora (Peruvian dodder).